Consider the following 203-residue polypeptide: LexA repressor (203 aa).

A DNA-binding region (H-T-H motif) is located at residues 28-47; the sequence is IREIGDEFGITAKGAYDHLK. Active-site for autocatalytic cleavage activity residues include serine 127 and lysine 164.

The protein belongs to the peptidase S24 family. As to quaternary structure, homodimer.

The enzyme catalyses Hydrolysis of Ala-|-Gly bond in repressor LexA.. In terms of biological role, represses a number of genes involved in the response to DNA damage (SOS response), including recA and lexA. In the presence of single-stranded DNA, RecA interacts with LexA causing an autocatalytic cleavage which disrupts the DNA-binding part of LexA, leading to derepression of the SOS regulon and eventually DNA repair. This chain is LexA repressor, found in Leptospira borgpetersenii serovar Hardjo-bovis (strain JB197).